The sequence spans 198 residues: Peptidyl-tRNA hydrolase (198 aa).

Residue tyrosine 15 participates in tRNA binding. The active-site Proton acceptor is the histidine 20. Residues phenylalanine 65, asparagine 67, and asparagine 113 each contribute to the tRNA site.

Belongs to the PTH family. Monomer.

The protein resides in the cytoplasm. The enzyme catalyses an N-acyl-L-alpha-aminoacyl-tRNA + H2O = an N-acyl-L-amino acid + a tRNA + H(+). Its function is as follows. Hydrolyzes ribosome-free peptidyl-tRNAs (with 1 or more amino acids incorporated), which drop off the ribosome during protein synthesis, or as a result of ribosome stalling. Functionally, catalyzes the release of premature peptidyl moieties from peptidyl-tRNA molecules trapped in stalled 50S ribosomal subunits, and thus maintains levels of free tRNAs and 50S ribosomes. The protein is Peptidyl-tRNA hydrolase of Ehrlichia chaffeensis (strain ATCC CRL-10679 / Arkansas).